Reading from the N-terminus, the 269-residue chain is Tryptophan synthase alpha chain (269 aa).

Active-site proton acceptor residues include Glu-49 and Asp-60.

The protein belongs to the TrpA family. As to quaternary structure, tetramer of two alpha and two beta chains.

The enzyme catalyses (1S,2R)-1-C-(indol-3-yl)glycerol 3-phosphate + L-serine = D-glyceraldehyde 3-phosphate + L-tryptophan + H2O. It functions in the pathway amino-acid biosynthesis; L-tryptophan biosynthesis; L-tryptophan from chorismate: step 5/5. The alpha subunit is responsible for the aldol cleavage of indoleglycerol phosphate to indole and glyceraldehyde 3-phosphate. The protein is Tryptophan synthase alpha chain of Actinobacillus pleuropneumoniae serotype 5b (strain L20).